The chain runs to 216 residues: Large ribosomal subunit protein uL1 (216 aa).

Belongs to the universal ribosomal protein uL1 family.

This is Large ribosomal subunit protein uL1 from Oryza sativa subsp. indica (Rice).